A 399-amino-acid chain; its full sequence is Phosphoglycerate kinase (399 aa).

Residues 22-24, R38, 61-64, R120, and R153 each bind substrate; these read DFN and HLGR. ATP contacts are provided by residues K204, E326, and 352–355; that span reads GGDT.

This sequence belongs to the phosphoglycerate kinase family. Monomer.

It localises to the cytoplasm. It carries out the reaction (2R)-3-phosphoglycerate + ATP = (2R)-3-phospho-glyceroyl phosphate + ADP. It participates in carbohydrate degradation; glycolysis; pyruvate from D-glyceraldehyde 3-phosphate: step 2/5. The chain is Phosphoglycerate kinase from Geotalea uraniireducens (strain Rf4) (Geobacter uraniireducens).